Reading from the N-terminus, the 115-residue chain is Large ribosomal subunit protein bL19 (115 aa).

The protein belongs to the bacterial ribosomal protein bL19 family.

In terms of biological role, this protein is located at the 30S-50S ribosomal subunit interface and may play a role in the structure and function of the aminoacyl-tRNA binding site. This chain is Large ribosomal subunit protein bL19, found in Francisella philomiragia subsp. philomiragia (strain ATCC 25017 / CCUG 19701 / FSC 153 / O#319-036).